The primary structure comprises 341 residues: Eukaryotic translation initiation factor 3 subunit I (341 aa).

6 WD repeats span residues 8–47 (GHER…RLGT), 56–95 (GHNG…CLYT), 151–190 (LSGS…EVQA), 194–233 (EHSA…VMKV), 235–274 (TTET…GKFE), and 291–331 (GHFG…RSRP).

It belongs to the eIF-3 subunit I family. In terms of assembly, component of the eukaryotic translation initiation factor 3 (eIF-3) complex.

The protein localises to the cytoplasm. Functionally, component of the eukaryotic translation initiation factor 3 (eIF-3) complex, which is involved in protein synthesis of a specialized repertoire of mRNAs and, together with other initiation factors, stimulates binding of mRNA and methionyl-tRNAi to the 40S ribosome. The eIF-3 complex specifically targets and initiates translation of a subset of mRNAs involved in cell proliferation. This Cryptococcus neoformans var. neoformans serotype D (strain B-3501A) (Filobasidiella neoformans) protein is Eukaryotic translation initiation factor 3 subunit I.